Consider the following 245-residue polypeptide: tRNA pseudouridine synthase A (245 aa).

The active-site Nucleophile is the aspartate 52. Residue tyrosine 111 coordinates substrate.

The protein belongs to the tRNA pseudouridine synthase TruA family. Homodimer.

The catalysed reaction is uridine(38/39/40) in tRNA = pseudouridine(38/39/40) in tRNA. Its function is as follows. Formation of pseudouridine at positions 38, 39 and 40 in the anticodon stem and loop of transfer RNAs. This chain is tRNA pseudouridine synthase A, found in Rickettsia typhi (strain ATCC VR-144 / Wilmington).